Consider the following 61-residue polypeptide: Large ribosomal subunit protein uL30 (61 aa).

This sequence belongs to the universal ribosomal protein uL30 family. Part of the 50S ribosomal subunit.

The chain is Large ribosomal subunit protein uL30 from Corynebacterium aurimucosum (strain ATCC 700975 / DSM 44827 / CIP 107346 / CN-1) (Corynebacterium nigricans).